The sequence spans 35 residues: Phosphoribulokinase (35 aa).

The protein belongs to the phosphoribulokinase family.

Its subcellular location is the plastid. The protein resides in the chloroplast. It carries out the reaction D-ribulose 5-phosphate + ATP = D-ribulose 1,5-bisphosphate + ADP + H(+). It functions in the pathway carbohydrate biosynthesis; Calvin cycle. Its activity is regulated as follows. Light regulated via thioredoxin by reversible oxidation/reduction of sulfhydryl/disulfide groups. The sequence is that of Phosphoribulokinase from Pinus pinaster (Maritime pine).